The sequence spans 105 residues: Resistin-like beta (105 aa).

The N-terminal stretch at 1–23 (MKPTLCFLFILVSLFPLIVPGNA) is a signal peptide. Intrachain disulfides connect C49–C102, C61–C101, C70–C87, C72–C89, and C76–C91.

The protein belongs to the resistin/FIZZ family. Homodimer; disulfide-linked. Heterodimer with RETNLG. In terms of tissue distribution, strongly expressed in colon, and at lower levels in ileum. In colon, found throughout the crypt and surface epithelium and in goblet cells (at protein level). Specific to the gastrointestinal tract; not detected in other tissues tested.

Its subcellular location is the secreted. Its function is as follows. Probable hormone. The sequence is that of Resistin-like beta (Retnlb) from Mus musculus (Mouse).